Here is a 157-residue protein sequence, read N- to C-terminus: Phosphopantetheine adenylyltransferase (157 aa).

Threonine 8 is a binding site for substrate. Residues 8–9 (TF) and histidine 16 each bind ATP. Residues lysine 40, threonine 72, and arginine 86 each coordinate substrate. ATP is bound by residues 87–89 (GLR), glutamate 97, and 122–128 (YSFLSSS).

This sequence belongs to the bacterial CoaD family. In terms of assembly, homohexamer. It depends on Mg(2+) as a cofactor.

Its subcellular location is the cytoplasm. The catalysed reaction is (R)-4'-phosphopantetheine + ATP + H(+) = 3'-dephospho-CoA + diphosphate. The protein operates within cofactor biosynthesis; coenzyme A biosynthesis; CoA from (R)-pantothenate: step 4/5. Reversibly transfers an adenylyl group from ATP to 4'-phosphopantetheine, yielding dephospho-CoA (dPCoA) and pyrophosphate. This is Phosphopantetheine adenylyltransferase from Prochlorococcus marinus (strain MIT 9301).